The sequence spans 306 residues: D-alanine--D-alanine ligase (306 aa).

The ATP-grasp domain occupies Lys101–Glu303. Ile134–Thr189 is an ATP binding site. Mg(2+) is bound by residues Asp257, Glu270, and Asn272.

The protein belongs to the D-alanine--D-alanine ligase family. Requires Mg(2+) as cofactor. The cofactor is Mn(2+).

The protein resides in the cytoplasm. It carries out the reaction 2 D-alanine + ATP = D-alanyl-D-alanine + ADP + phosphate + H(+). The protein operates within cell wall biogenesis; peptidoglycan biosynthesis. Its function is as follows. Cell wall formation. The protein is D-alanine--D-alanine ligase of Salmonella paratyphi A (strain ATCC 9150 / SARB42).